The sequence spans 1062 residues: Carbamoyl phosphate synthase pyrimidine-specific large chain (1062 aa).

The segment at 1–401 is carboxyphosphate synthetic domain; that stretch reads MGKREDIKKI…SLLKAVRSLE (401 aa). ATP is bound by residues Arg129, Arg169, Gly175, Gly176, Lys208, Ile210, Glu215, Gly241, Val242, His243, Gln284, and Glu298. An ATP-grasp 1 domain is found at 133–327; it reads RALMKELNEP…IAKIAAKIAV (195 aa). Residues Gln284, Glu298, and Asn300 each coordinate Mg(2+). The Mn(2+) site is built by Gln284, Glu298, and Asn300. The segment at 402–546 is oligomerization domain; that stretch reads AGVYHLDQPD…YGTYEEENES (145 aa). The segment at 547 to 929 is carbamoyl phosphate synthetic domain; that stretch reads ERTDKKSILV…ALYKGLIASG (383 aa). The ATP-grasp 2 domain maps to 671-861; it reads EQTLVELNIP…MANVATKVML (191 aa). Arg707, Arg746, Leu748, Glu752, Gly777, Val778, His779, Ser780, Gln820, and Glu832 together coordinate ATP. The Mg(2+) site is built by Gln820, Glu832, and Asn834. Positions 820, 832, and 834 each coordinate Mn(2+). The MGS-like domain maps to 930-1062; it reads MSIPTHGSVL…FSAESMPVMQ (133 aa). The segment at 930-1062 is allosteric domain; it reads MSIPTHGSVL…FSAESMPVMQ (133 aa).

The protein belongs to the CarB family. Composed of two chains; the small (or glutamine) chain promotes the hydrolysis of glutamine to ammonia, which is used by the large (or ammonia) chain to synthesize carbamoyl phosphate. Tetramer of heterodimers (alpha,beta)4. The cofactor is Mg(2+). Requires Mn(2+) as cofactor.

The catalysed reaction is hydrogencarbonate + L-glutamine + 2 ATP + H2O = carbamoyl phosphate + L-glutamate + 2 ADP + phosphate + 2 H(+). It catalyses the reaction hydrogencarbonate + NH4(+) + 2 ATP = carbamoyl phosphate + 2 ADP + phosphate + 2 H(+). The protein operates within amino-acid biosynthesis; L-arginine biosynthesis; carbamoyl phosphate from bicarbonate: step 1/1. Its pathway is pyrimidine metabolism; UMP biosynthesis via de novo pathway; (S)-dihydroorotate from bicarbonate: step 1/3. Functionally, small subunit of the glutamine-dependent carbamoyl phosphate synthetase (CPSase). CPSase catalyzes the formation of carbamoyl phosphate from the ammonia moiety of glutamine, carbonate, and phosphate donated by ATP, constituting the first step of the biosynthetic pathway leading to pyrimidine nucleotides. The large subunit (synthetase) binds the substrates ammonia (free or transferred from glutamine from the small subunit), hydrogencarbonate and ATP and carries out an ATP-coupled ligase reaction, activating hydrogencarbonate by forming carboxy phosphate which reacts with ammonia to form carbamoyl phosphate. The protein is Carbamoyl phosphate synthase pyrimidine-specific large chain (pyrAB) of Halalkalibacterium halodurans (strain ATCC BAA-125 / DSM 18197 / FERM 7344 / JCM 9153 / C-125) (Bacillus halodurans).